A 496-amino-acid polypeptide reads, in one-letter code: Adenosylhomocysteinase (496 aa).

Residues Thr68, Asp157, and Glu219 each contribute to the substrate site. 220 to 222 (TTT) contributes to the NAD(+) binding site. Residues Lys249 and Asp253 each coordinate substrate. NAD(+)-binding positions include Asn254, 283 to 288 (GYGDVG), Glu306, Asn341, 362 to 364 (IGH), and Asn410.

Belongs to the adenosylhomocysteinase family. Requires NAD(+) as cofactor.

The protein localises to the cytoplasm. It carries out the reaction S-adenosyl-L-homocysteine + H2O = L-homocysteine + adenosine. It functions in the pathway amino-acid biosynthesis; L-homocysteine biosynthesis; L-homocysteine from S-adenosyl-L-homocysteine: step 1/1. May play a key role in the regulation of the intracellular concentration of adenosylhomocysteine. This chain is Adenosylhomocysteinase, found in Mycolicibacterium paratuberculosis (strain ATCC BAA-968 / K-10) (Mycobacterium paratuberculosis).